We begin with the raw amino-acid sequence, 150 residues long: Large ribosomal subunit protein uL15 (150 aa).

Residues 1–55 (MADNEILQMHDLKPAPGAKKDRTRVGRGEGSKGKTAGRGAKGQTKRNHVRPGFEG) are disordered. The span at 8–32 (QMHDLKPAPGAKKDRTRVGRGEGSK) shows a compositional bias: basic and acidic residues.

Belongs to the universal ribosomal protein uL15 family. Part of the 50S ribosomal subunit.

In terms of biological role, binds to the 23S rRNA. The polypeptide is Large ribosomal subunit protein uL15 (Bifidobacterium longum (strain DJO10A)).